A 101-amino-acid chain; its full sequence is MTETGGQPPVSFPVKDVAGLLFLLRRLTRRGRNAACGQCPASGWARDGRFYRSRLASVTVYASPSPFSDERPSSRFRGIFSPSKRRRLRYSTVGLTRYRTR.

This is an uncharacterized protein from Escherichia coli (strain K12).